The chain runs to 274 residues: 3-methyl-2-oxobutanoate hydroxymethyltransferase (274 aa).

Residues Asp-49 and Asp-88 each coordinate Mg(2+). Residues 49 to 50, Asp-88, and Lys-118 each bind 3-methyl-2-oxobutanoate; that span reads DS. Glu-120 contacts Mg(2+). Glu-187 serves as the catalytic Proton acceptor.

The protein belongs to the PanB family. In terms of assembly, homodecamer; pentamer of dimers. Requires Mg(2+) as cofactor.

The protein resides in the cytoplasm. The catalysed reaction is 3-methyl-2-oxobutanoate + (6R)-5,10-methylene-5,6,7,8-tetrahydrofolate + H2O = 2-dehydropantoate + (6S)-5,6,7,8-tetrahydrofolate. It functions in the pathway cofactor biosynthesis; (R)-pantothenate biosynthesis; (R)-pantoate from 3-methyl-2-oxobutanoate: step 1/2. Its function is as follows. Catalyzes the reversible reaction in which hydroxymethyl group from 5,10-methylenetetrahydrofolate is transferred onto alpha-ketoisovalerate to form ketopantoate. In Rhodopseudomonas palustris (strain ATCC BAA-98 / CGA009), this protein is 3-methyl-2-oxobutanoate hydroxymethyltransferase.